Reading from the N-terminus, the 333-residue chain is Holliday junction branch migration complex subunit RuvB (333 aa).

A large ATPase domain (RuvB-L) region spans residues 1–182; the sequence is MDERLLSGES…FGVLSRLEYY (182 aa). Residues L21, R22, G63, K66, T67, T68, 129-131, R172, Y182, and R219 contribute to the ATP site; that span reads EDF. T67 provides a ligand contact to Mg(2+). Residues 183–253 form a small ATPAse domain (RuvB-S) region; it reads TVDQLSAIVE…ITQMALELLQ (71 aa). Residues 256-333 are head domain (RuvB-H); that stretch reads KLGLDHIDHK…QHFGMEMPKI (78 aa). 2 residues coordinate DNA: R311 and R316.

The protein belongs to the RuvB family. Homohexamer. Forms an RuvA(8)-RuvB(12)-Holliday junction (HJ) complex. HJ DNA is sandwiched between 2 RuvA tetramers; dsDNA enters through RuvA and exits via RuvB. An RuvB hexamer assembles on each DNA strand where it exits the tetramer. Each RuvB hexamer is contacted by two RuvA subunits (via domain III) on 2 adjacent RuvB subunits; this complex drives branch migration. In the full resolvosome a probable DNA-RuvA(4)-RuvB(12)-RuvC(2) complex forms which resolves the HJ.

It localises to the cytoplasm. It catalyses the reaction ATP + H2O = ADP + phosphate + H(+). In terms of biological role, the RuvA-RuvB-RuvC complex processes Holliday junction (HJ) DNA during genetic recombination and DNA repair, while the RuvA-RuvB complex plays an important role in the rescue of blocked DNA replication forks via replication fork reversal (RFR). RuvA specifically binds to HJ cruciform DNA, conferring on it an open structure. The RuvB hexamer acts as an ATP-dependent pump, pulling dsDNA into and through the RuvAB complex. RuvB forms 2 homohexamers on either side of HJ DNA bound by 1 or 2 RuvA tetramers; 4 subunits per hexamer contact DNA at a time. Coordinated motions by a converter formed by DNA-disengaged RuvB subunits stimulates ATP hydrolysis and nucleotide exchange. Immobilization of the converter enables RuvB to convert the ATP-contained energy into a lever motion, pulling 2 nucleotides of DNA out of the RuvA tetramer per ATP hydrolyzed, thus driving DNA branch migration. The RuvB motors rotate together with the DNA substrate, which together with the progressing nucleotide cycle form the mechanistic basis for DNA recombination by continuous HJ branch migration. Branch migration allows RuvC to scan DNA until it finds its consensus sequence, where it cleaves and resolves cruciform DNA. The polypeptide is Holliday junction branch migration complex subunit RuvB (Bacillus cytotoxicus (strain DSM 22905 / CIP 110041 / 391-98 / NVH 391-98)).